The sequence spans 367 residues: Apolipoprotein A-V (367 aa).

Residues 1-20 (MVAVLTWALALLSAFATVQT) form the signal peptide. Ser-56 carries the post-translational modification Phosphoserine. Positions 71-90 (LGPLSGQGREPPGLPHDPEG) are disordered.

This sequence belongs to the apolipoprotein A1/A4/E family. In terms of assembly, interacts with GPIHBP1. Interacts with SORL1; this interaction leads to APOA5 internalization and sorting either to lysosomes and degradation, or to the trans-Golgi network. In terms of processing, phosphorylated by FAM20C in the extracellular medium.

The protein localises to the secreted. Its subcellular location is the early endosome. It is found in the late endosome. It localises to the golgi apparatus. The protein resides in the trans-Golgi network. Minor apolipoprotein mainly associated with HDL and to a lesser extent with VLDL. May also be associated with chylomicrons. Important determinant of plasma triglyceride (TG) levels by both being a potent stimulator of apo-CII lipoprotein lipase (LPL) TG hydrolysis and an inhibitor of the hepatic VLDL-TG production rate (without affecting the VLDL-apoB production rate). Activates poorly lecithin:cholesterol acyltransferase (LCAT) and does not enhance efflux of cholesterol from macrophages. Binds heparin. The sequence is that of Apolipoprotein A-V (APOA5) from Neomonachus schauinslandi (Hawaiian monk seal).